The chain runs to 185 residues: MGLEEKLPSGVLLTTVEQIVGFVRKTSMWPATFGLACCAIEMMAAGGPRFDIARFGMERFSATPRQADLMIVAGRVSQKMAPVLRTIYDQMAEPKWVIAMGVCASSGGMFNNYAIVQGVDHIVPVDIYLPGCPPRPEMLLDAILKLHDKVQNTKLGVHREREIEELEQRRLRALPLIQQTEEATR.

[4Fe-4S] cluster-binding residues include Cys37, Cys38, Cys103, and Cys132.

This sequence belongs to the complex I 20 kDa subunit family. NDH-1 is composed of 14 different subunits. Subunits NuoB, C, D, E, F, and G constitute the peripheral sector of the complex. It depends on [4Fe-4S] cluster as a cofactor.

The protein resides in the cell membrane. It catalyses the reaction a quinone + NADH + 5 H(+)(in) = a quinol + NAD(+) + 4 H(+)(out). Its function is as follows. NDH-1 shuttles electrons from NADH, via FMN and iron-sulfur (Fe-S) centers, to quinones in the respiratory chain. The immediate electron acceptor for the enzyme in this species is believed to be a menaquinone. Couples the redox reaction to proton translocation (for every two electrons transferred, four hydrogen ions are translocated across the cytoplasmic membrane), and thus conserves the redox energy in a proton gradient. In Thermobifida fusca (strain YX), this protein is NADH-quinone oxidoreductase subunit B.